The primary structure comprises 475 residues: tRNA-2-methylthio-N(6)-dimethylallyladenosine synthase (475 aa).

The interval 1 to 21 (MTTAPTSPALPASSDTAPTGP) is disordered. Residues 24 to 145 (RGLHVITWGC…LPEMVARAAR (122 aa)) form the MTTase N-terminal domain. Residues cysteine 33, cysteine 69, cysteine 108, cysteine 186, cysteine 190, and cysteine 193 each coordinate [4Fe-4S] cluster. The Radical SAM core domain occupies 172–404 (TQGNLTAFLT…QALLREQQDA (233 aa)). Residues 407 to 469 (ADMVGTVQEI…TNSLGGTLIR (63 aa)) form the TRAM domain.

The protein belongs to the methylthiotransferase family. MiaB subfamily. As to quaternary structure, monomer. It depends on [4Fe-4S] cluster as a cofactor.

The protein localises to the cytoplasm. The catalysed reaction is N(6)-dimethylallyladenosine(37) in tRNA + (sulfur carrier)-SH + AH2 + 2 S-adenosyl-L-methionine = 2-methylsulfanyl-N(6)-dimethylallyladenosine(37) in tRNA + (sulfur carrier)-H + 5'-deoxyadenosine + L-methionine + A + S-adenosyl-L-homocysteine + 2 H(+). Functionally, catalyzes the methylthiolation of N6-(dimethylallyl)adenosine (i(6)A), leading to the formation of 2-methylthio-N6-(dimethylallyl)adenosine (ms(2)i(6)A) at position 37 in tRNAs that read codons beginning with uridine. The sequence is that of tRNA-2-methylthio-N(6)-dimethylallyladenosine synthase from Gluconobacter oxydans (strain 621H) (Gluconobacter suboxydans).